The following is a 500-amino-acid chain: Small ribosomal subunit protein uS3m (500 aa).

It belongs to the universal ribosomal protein uS3 family.

Its subcellular location is the mitochondrion. The chain is Small ribosomal subunit protein uS3m (RPS3) from Prototheca wickerhamii.